An 896-amino-acid polypeptide reads, in one-letter code: Histone-lysine N-methyltransferase CLF (896 aa).

Disordered regions lie at residues 344–419 (DNLK…NRRI) and 459–514 (SGIK…DGCD). The segment covering 358–390 (GSSGQKTKSQQSESSSTARVSSESSESEVQLLS) has biased composition (low complexity). Polar residues-rich tracts occupy residues 391 to 400 (NKSPQHSPGL), 465 to 476 (VVSSQCNSPSTR), and 485 to 498 (QMEN…AQSD). Positions 504-514 (NNEHSATDGCD) are enriched in basic and acidic residues. Positions 633–732 (RKRITERKDQ…TLGVPNQRGD (100 aa)) constitute a CXC domain. The region spanning 747-862 (QRVLLGRSDV…AGEELFYDYR (116 aa)) is the SET domain. S-adenosyl-L-methionine is bound at residue Tyr-861. Over residues 869-884 (PAWARKPEGPGAKDDA) the composition is skewed to basic and acidic residues. The segment at 869-896 (PAWARKPEGPGAKDDAQPSTGRAKKLAH) is disordered.

This sequence belongs to the class V-like SAM-binding methyltransferase superfamily. Histone-lysine methyltransferase family. EZ subfamily. In terms of assembly, interacts with FIE1. Component of the polycomb repressive complex 2 (PRC2), composed of the core PRC2 components FIE2, EMF2B and EZ1. PRC2 methylates 'Lys-27' residues of histone H3 (H3K27me3), leading to transcriptional repression of the affected target gene. As to expression, widely expressed. Highly expressed in young panicle.

The catalysed reaction is L-lysyl(27)-[histone H3] + 3 S-adenosyl-L-methionine = N(6),N(6),N(6)-trimethyl-L-lysyl(27)-[histone H3] + 3 S-adenosyl-L-homocysteine + 3 H(+). In terms of biological role, polycomb group (PcG) protein. Catalytic subunit of some PcG multiprotein complex, which methylates 'Lys-27' of histone H3, leading to transcriptional repression of the affected target genes. PcG proteins act by forming multiprotein complexes, which are required to maintain the transcriptionally repressive state of homeotic genes throughout development. PcG proteins are not required to initiate repression, but to maintain it during later stages of development. Involved in the regulation of flowering. Represses flowering under long day (LD) conditions. Regulates the trimethylation on histone H3 'Lys-27' (H3K27me3) of the flowering regulators MADS14, MADS15, RFT1, EHD1, HD3A and LF. In Oryza sativa subsp. japonica (Rice), this protein is Histone-lysine N-methyltransferase CLF.